We begin with the raw amino-acid sequence, 390 residues long: GTPase Obg (390 aa).

Positions 1-159 (MKFVDEASVK…RELRLELLLL (159 aa)) constitute an Obg domain. Residues 160–333 (ADVGMLGLPN…LCFKLGEFME (174 aa)) enclose the OBG-type G domain. GTP-binding positions include 166 to 173 (GLPNAGKS), 191 to 195 (FTTLI), 213 to 216 (DIPG), 283 to 286 (NKVD), and 314 to 316 (SAV). 2 residues coordinate Mg(2+): S173 and T193.

The protein belongs to the TRAFAC class OBG-HflX-like GTPase superfamily. OBG GTPase family. As to quaternary structure, monomer. It depends on Mg(2+) as a cofactor.

Its subcellular location is the cytoplasm. Functionally, an essential GTPase which binds GTP, GDP and possibly (p)ppGpp with moderate affinity, with high nucleotide exchange rates and a fairly low GTP hydrolysis rate. Plays a role in control of the cell cycle, stress response, ribosome biogenesis and in those bacteria that undergo differentiation, in morphogenesis control. This Vibrio atlanticus (strain LGP32) (Vibrio splendidus (strain Mel32)) protein is GTPase Obg.